The following is a 238-amino-acid chain: Chromosome partition protein MukE (238 aa).

The tract at residues 206–238 (EESSQSSFDLDENEKLSDISAEEQHELELEGDA) is disordered. The segment covering 218-238 (NEKLSDISAEEQHELELEGDA) has biased composition (basic and acidic residues).

The protein belongs to the MukE family. In terms of assembly, interacts, and probably forms a ternary complex, with MukF and MukB. The complex formation is stimulated by calcium or magnesium.

The protein resides in the cytoplasm. The protein localises to the nucleoid. Its function is as follows. Involved in chromosome condensation, segregation and cell cycle progression. May participate in facilitating chromosome segregation by condensation DNA from both sides of a centrally located replisome during cell division. Probably acts via its interaction with MukB and MukF. The protein is Chromosome partition protein MukE of Aliivibrio salmonicida (strain LFI1238) (Vibrio salmonicida (strain LFI1238)).